Here is a 173-residue protein sequence, read N- to C-terminus: Co-chaperone protein HscB homolog (173 aa).

Residues 3–75 (NPFSLFNLPV…IARATAIIEI (73 aa)) enclose the J domain.

Belongs to the HscB family. Interacts with HscA and stimulates its ATPase activity.

In terms of biological role, co-chaperone involved in the maturation of iron-sulfur cluster-containing proteins. Seems to help targeting proteins to be folded toward HscA. This is Co-chaperone protein HscB homolog from Haemophilus ducreyi (strain 35000HP / ATCC 700724).